We begin with the raw amino-acid sequence, 168 residues long: tRNA (cytidine(56)-2'-O)-methyltransferase (168 aa).

S-adenosyl-L-methionine-binding positions include Leu-79 and 104-108; that span reads GAEKV.

Belongs to the aTrm56 family. As to quaternary structure, homodimer.

The protein resides in the cytoplasm. It carries out the reaction cytidine(56) in tRNA + S-adenosyl-L-methionine = 2'-O-methylcytidine(56) in tRNA + S-adenosyl-L-homocysteine + H(+). Specifically catalyzes the AdoMet-dependent 2'-O-ribose methylation of cytidine at position 56 in tRNAs. This chain is tRNA (cytidine(56)-2'-O)-methyltransferase, found in Archaeoglobus fulgidus (strain ATCC 49558 / DSM 4304 / JCM 9628 / NBRC 100126 / VC-16).